The following is a 493-amino-acid chain: Protein translocase subunit SecY (493 aa).

The Cytoplasmic segment spans residues 1–21 (MDSVIRALQPYFERIPSVERP). Residues 22 to 48 (KGHVHFREKFGWTAAILLLYFILSNVP) traverse the membrane as a helical segment. Over 49–59 (VFGLSPESIDI) the chain is Extracellular. Positions 60-67 (FAAYRALF) form an intramembrane region, helical. A discontinuously helical transmembrane segment spans residues 60–88 (FAAYRALFAGSTGSIIALGIGPIVTASII). Residues 68–79 (AGSTGSIIALGI) lie within the membrane without spanning it. An intramembrane region (helical) is located at residues 80-88 (GPIVTASII). Topologically, residues 89–109 (LQLLVGAGIIKLDLTNPEDRA) are cytoplasmic. A helical membrane pass occupies residues 110-134 (AYQDFQRFLVFVMIAVEAIPQIAGG). Over 135-151 (LLKPDLNLAAQLGVSPG) the chain is Extracellular. Residues 152–176 (IISFLIFIQLFIGGVLIVYMDEVVS) form a helical membrane-spanning segment. Over 177-182 (KWGIGS) the chain is Cytoplasmic. The chain crosses the membrane as a helical span at residues 183 to 201 (GVSLFILAGIAQSIVVGLF). Residues 202–244 (NWVIPPNSAMPAGIIPRWIWIAQNYPLDQLFTGSGLAFLLIQG) lie on the Extracellular side of the membrane. Residues 245–266 (GILALITTAAIILLVVFFEGTR) form a helical membrane-spanning segment. The Cytoplasmic segment spans residues 267 to 291 (VEIPLAHAVARGARGRFPIKLIYAS). Residues 292-313 (VLPMIFVRALQANVVALGQVLH) form a helical membrane-spanning segment. At 314–367 (ARGVTIFGEFVNGKAVSGLMFFLQPVSSPYDWIPSLVKSQGAAFAAIPDWMIYL) the chain is on the extracellular side. The chain crosses the membrane as a helical span at residues 368–387 (HLLIDALILVVGGIIFAWFW). Topologically, residues 388–430 (VETSGMDARTVASQIAKSGMQVPGFRKSPQVLERVLSRYIPKV) are cytoplasmic. The helical transmembrane segment at 431 to 449 (TILGGAIIGILTLVANMLG) threads the bilayer. Residues 450–454 (TIGNV) are Extracellular-facing. The helical transmembrane segment at 455 to 469 (SGTGLLLAVSIAYRF) threads the bilayer. Residues 470-493 (YEDLAKEQLTEMHPLIRRMLGEEA) lie on the Cytoplasmic side of the membrane.

Belongs to the SecY/SEC61-alpha family. Component of the Sec protein translocase complex. Heterotrimer consisting of alpha (SecY), beta (SecG) and gamma (SecE) subunits. The heterotrimers can form oligomers, although 1 heterotrimer is thought to be able to translocate proteins. Interacts with the ribosome. May interact with SecDF, and other proteins may be involved.

The protein localises to the cell membrane. Its function is as follows. The central subunit of the protein translocation channel SecYEG. Consists of two halves formed by TMs 1-5 and 6-10. These two domains form a lateral gate at the front which open onto the bilayer between TMs 2 and 7, and are clamped together by SecE at the back. The channel is closed by both a pore ring composed of hydrophobic SecY resides and a short helix (helix 2A) on the extracellular side of the membrane which forms a plug. The plug probably moves laterally to allow the channel to open. The ring and the pore may move independently. The sequence is that of Protein translocase subunit SecY from Archaeoglobus fulgidus (strain ATCC 49558 / DSM 4304 / JCM 9628 / NBRC 100126 / VC-16).